Consider the following 148-residue polypeptide: NADPH-dependent 7-cyano-7-deazaguanine reductase (148 aa).

The active-site Thioimide intermediate is Cys-50. Asp-57 acts as the Proton donor in catalysis. Substrate contacts are provided by residues Val-72–Ser-74 and His-91–Glu-92.

Belongs to the GTP cyclohydrolase I family. QueF type 1 subfamily.

The protein localises to the cytoplasm. It catalyses the reaction 7-aminomethyl-7-carbaguanine + 2 NADP(+) = 7-cyano-7-deazaguanine + 2 NADPH + 3 H(+). It functions in the pathway tRNA modification; tRNA-queuosine biosynthesis. Its function is as follows. Catalyzes the NADPH-dependent reduction of 7-cyano-7-deazaguanine (preQ0) to 7-aminomethyl-7-deazaguanine (preQ1). This Helicobacter pylori (strain ATCC 700392 / 26695) (Campylobacter pylori) protein is NADPH-dependent 7-cyano-7-deazaguanine reductase.